Reading from the N-terminus, the 662-residue chain is DNA ligase (662 aa).

Residues 31–35 (DKDYD) and 79–80 (SL) contribute to the NAD(+) site. Catalysis depends on lysine 121, which acts as the N6-AMP-lysine intermediate. Residues arginine 143, glutamate 177, and lysine 313 each coordinate NAD(+). Cysteine 406, cysteine 409, cysteine 422, and cysteine 428 together coordinate Zn(2+). Residues 586-662 (VLESPFMGKT…LSEEEFENMI (77 aa)) form the BRCT domain.

Belongs to the NAD-dependent DNA ligase family. LigA subfamily. Mg(2+) is required as a cofactor. Mn(2+) serves as cofactor.

It catalyses the reaction NAD(+) + (deoxyribonucleotide)n-3'-hydroxyl + 5'-phospho-(deoxyribonucleotide)m = (deoxyribonucleotide)n+m + AMP + beta-nicotinamide D-nucleotide.. Its function is as follows. DNA ligase that catalyzes the formation of phosphodiester linkages between 5'-phosphoryl and 3'-hydroxyl groups in double-stranded DNA using NAD as a coenzyme and as the energy source for the reaction. It is essential for DNA replication and repair of damaged DNA. This Clostridium perfringens (strain 13 / Type A) protein is DNA ligase.